A 584-amino-acid chain; its full sequence is Probable terpene synthase 9 (584 aa).

Residues Asp-339, Asp-343, and Glu-491 each coordinate Mg(2+). The short motif at 339 to 343 is the DDXXD motif element; the sequence is DDMYD.

The protein belongs to the terpene synthase family. Requires Mg(2+) as cofactor.

Its function is as follows. Probable sesquiterpene synthase. This chain is Probable terpene synthase 9 (TPS9), found in Ricinus communis (Castor bean).